We begin with the raw amino-acid sequence, 65 residues long: MAKKATKTITVEQIGSPIRRPKEQRATLVGLGLNKMHKQRTLEDTPSVRGMIAAVQHLVRVVDEG.

This sequence belongs to the universal ribosomal protein uL30 family. As to quaternary structure, part of the 50S ribosomal subunit.

The sequence is that of Large ribosomal subunit protein uL30 from Mesorhizobium japonicum (strain LMG 29417 / CECT 9101 / MAFF 303099) (Mesorhizobium loti (strain MAFF 303099)).